The chain runs to 417 residues: Pre-mRNA-splicing factor RBM22 (417 aa).

The C3H1-type zinc finger occupies 159 to 186 (RNRPHICSFWVKGECKRGEECPYRHEKP). Positions 232 to 305 (TTLYVGGLGD…RRLNVKWGRS (74 aa)) constitute an RRM domain. Disordered stretches follow at residues 303-348 (GRSQ…SANY) and 369-417 (GLSG…PSSG). Residues 309–318 (RGKEREHDGS) are compositionally biased toward basic and acidic residues. Residues 369-391 (GLSGPPPGFGPHMFPPMAPPPFL) show a composition bias toward pro residues.

Belongs to the SLT11 family. Component of the pre-catalytic and catalytic spliceosome complexes. Component of the postcatalytic spliceosome P complex.

It localises to the nucleus. Its subcellular location is the cytoplasm. Functionally, required for pre-mRNA splicing as component of the activated spliceosome. Involved in the first step of pre-mRNA splicing. Binds directly to the internal stem-loop (ISL) domain of the U6 snRNA and to the pre-mRNA intron near the 5' splice site during the activation and catalytic phases of the spliceosome cycle. This is Pre-mRNA-splicing factor RBM22 (rbm22) from Xenopus laevis (African clawed frog).